Reading from the N-terminus, the 250-residue chain is Leucyl/phenylalanyl-tRNA--protein transferase (250 aa).

It belongs to the L/F-transferase family.

It localises to the cytoplasm. The catalysed reaction is N-terminal L-lysyl-[protein] + L-leucyl-tRNA(Leu) = N-terminal L-leucyl-L-lysyl-[protein] + tRNA(Leu) + H(+). The enzyme catalyses N-terminal L-arginyl-[protein] + L-leucyl-tRNA(Leu) = N-terminal L-leucyl-L-arginyl-[protein] + tRNA(Leu) + H(+). It catalyses the reaction L-phenylalanyl-tRNA(Phe) + an N-terminal L-alpha-aminoacyl-[protein] = an N-terminal L-phenylalanyl-L-alpha-aminoacyl-[protein] + tRNA(Phe). In terms of biological role, functions in the N-end rule pathway of protein degradation where it conjugates Leu, Phe and, less efficiently, Met from aminoacyl-tRNAs to the N-termini of proteins containing an N-terminal arginine or lysine. The protein is Leucyl/phenylalanyl-tRNA--protein transferase of Cupriavidus taiwanensis (strain DSM 17343 / BCRC 17206 / CCUG 44338 / CIP 107171 / LMG 19424 / R1) (Ralstonia taiwanensis (strain LMG 19424)).